We begin with the raw amino-acid sequence, 1056 residues long: Isoleucine--tRNA ligase (1056 aa).

Over residues 1 to 13 (MCDQGEVSSQNSS) the composition is skewed to polar residues. A disordered region spans residues 1–26 (MCDQGEVSSQNSSDYKEQRPTPRPNL). The short motif at 63–73 (PFANGLPHFGH) is the 'HIGH' region element. A 'KMSKS' region motif is present at residues 632-636 (KASKS). Lys635 contacts ATP.

Belongs to the class-I aminoacyl-tRNA synthetase family. IleS type 2 subfamily. In terms of assembly, monomer. Zn(2+) is required as a cofactor.

It is found in the cytoplasm. It carries out the reaction tRNA(Ile) + L-isoleucine + ATP = L-isoleucyl-tRNA(Ile) + AMP + diphosphate. Its function is as follows. Catalyzes the attachment of isoleucine to tRNA(Ile). As IleRS can inadvertently accommodate and process structurally similar amino acids such as valine, to avoid such errors it has two additional distinct tRNA(Ile)-dependent editing activities. One activity is designated as 'pretransfer' editing and involves the hydrolysis of activated Val-AMP. The other activity is designated 'posttransfer' editing and involves deacylation of mischarged Val-tRNA(Ile). The chain is Isoleucine--tRNA ligase from Tropheryma whipplei (strain TW08/27) (Whipple's bacillus).